The chain runs to 398 residues: MSEQLLTASTSIDAAPLSDNTVQTTAPATSKINLLDLNRQQMREFFAEMGEKPFRADQVMKWMYHYCYDDFEQMTDINKGLRAKLQRVAEIRAPEVAEEQRSVDGTIKWAIKVGDQQVETVYIPEADRATLCVSSQVGCALECKFCSTAQQGFNRNLRVSEIIGQVWRAAKIIGSLKSTGTRPITNVVMMGMGEPLLNLNNVVPAMDIMMDDFGFGLSKRRVTLSTSGVVPALDKLGDMIDVALAISLHAPTDDIRDEIVPINRKYNIETFLAAVRRYLDKSKANGGRVTVEYVMLDHINDSTEQAHQLAECLKDTPCKINLIPWNPFPGAPYGRSSNSRVDRFSKVLMEYGFTTIVRKTRGDDIDAACGQLAGEVIDRTKRTLKKKMAGEPIAIKTV.

The active-site Proton acceptor is the E119. In terms of domain architecture, Radical SAM core spans 125–364 (EADRATLCVS…TIVRKTRGDD (240 aa)). C132 and C369 are oxidised to a cystine. The [4Fe-4S] cluster site is built by C139, C143, and C146. Residues 193-194 (GE), S225, 247-249 (SLH), and N326 each bind S-adenosyl-L-methionine. Residue C369 is the S-methylcysteine intermediate of the active site.

This sequence belongs to the radical SAM superfamily. RlmN family. The cofactor is [4Fe-4S] cluster.

It localises to the cytoplasm. The enzyme catalyses adenosine(2503) in 23S rRNA + 2 reduced [2Fe-2S]-[ferredoxin] + 2 S-adenosyl-L-methionine = 2-methyladenosine(2503) in 23S rRNA + 5'-deoxyadenosine + L-methionine + 2 oxidized [2Fe-2S]-[ferredoxin] + S-adenosyl-L-homocysteine. It carries out the reaction adenosine(37) in tRNA + 2 reduced [2Fe-2S]-[ferredoxin] + 2 S-adenosyl-L-methionine = 2-methyladenosine(37) in tRNA + 5'-deoxyadenosine + L-methionine + 2 oxidized [2Fe-2S]-[ferredoxin] + S-adenosyl-L-homocysteine. In terms of biological role, specifically methylates position 2 of adenine 2503 in 23S rRNA and position 2 of adenine 37 in tRNAs. m2A2503 modification seems to play a crucial role in the proofreading step occurring at the peptidyl transferase center and thus would serve to optimize ribosomal fidelity. This is Dual-specificity RNA methyltransferase RlmN from Yersinia pseudotuberculosis serotype O:3 (strain YPIII).